We begin with the raw amino-acid sequence, 298 residues long: MKPARQAVDGVLLLNKPVGITSNAALQKAKWLLNAKKAGHTGTLDPFADGLLPLCFGEATKFSAYLLDADKRYRAILQLGVTTRTGDPEGEVLATREVRATCADIRAALPAFVGEIEQIPPMHSALKHQGRPLYEYARAGVEIARAPRRVHIRALDLFKCAPPRAVVDVQCSAGTYVRTLAEDLGNALGCGAHLTALTRTASGGFLLEQAHTLAELEATNAGARQALLLPADCLVAHLPSVHLGETAAASLRQGRSVPDAADRRGLVRVYDGHGVFVGLAEAEAGKLVPRRLIATVQA.

Residue aspartate 45 is the Nucleophile of the active site.

It belongs to the pseudouridine synthase TruB family. Type 1 subfamily.

The enzyme catalyses uridine(55) in tRNA = pseudouridine(55) in tRNA. Functionally, responsible for synthesis of pseudouridine from uracil-55 in the psi GC loop of transfer RNAs. In Thiobacillus denitrificans (strain ATCC 25259 / T1), this protein is tRNA pseudouridine synthase B.